The following is a 476-amino-acid chain: Protein THYLAKOID RHODANESE-LIKE, chloroplastic (476 aa).

Residues 1 to 21 constitute a chloroplast transit peptide; that stretch reads MAATTTILSSAAPTPLTAPPR. A disordered region spans residues 1–29; sequence MAATTTILSSAAPTPLTAPPRARARAPAA. Low complexity predominate over residues 11 to 21; sequence AAPTPLTAPPR. Residues 22–58 constitute a thylakoid transit peptide; the sequence is ARARAPAARRRRLRARDILGAALGLANGGASAALAAP. A helical membrane pass occupies residues 100 to 120; that stretch reads LVAAAGVAAVALPLVLAQVLG. The Rhodanese domain occupies 140–246; sequence EEPGAQLVDI…WLSSSLPWTA (107 aa). Transmembrane regions (helical) follow at residues 264-284 and 287-307; these read LPVT…YTEI and VLQF…LIYA. The tract at residues 342 to 476 is disordered; the sequence is LPSTGTKSQP…PPSSPSPSAP (135 aa). Low complexity predominate over residues 351–389; it reads PAITEAAPATAEAAPAAATATAAPPAAPVEETSTEAAPA. Pro residues predominate over residues 403–412; that stretch reads LKPPSSPSPL. The segment covering 425-446 has biased composition (low complexity); it reads ESAATESAPAVNSAPVAEAAPE. The segment covering 447–476 has biased composition (pro residues); the sequence is AAPPAAPRPLSPYPNYPDLKPPSSPSPSAP.

Component of high molecular weight thylakoid LFNRs-containing protein complexes containing LIR1, LFNR1, LFNR2, TIC62 and TROL proteins.

It localises to the plastid. Its subcellular location is the chloroplast thylakoid membrane. In terms of biological role, rhodanese domain-containing protein required for anchoring ferredoxin--NADP reductase to the thylakoid membranes and sustaining efficient linear electron flow (LEF). In Oryza sativa subsp. indica (Rice), this protein is Protein THYLAKOID RHODANESE-LIKE, chloroplastic.